Here is a 390-residue protein sequence, read N- to C-terminus: S-adenosylmethionine synthase 3 (390 aa).

Mg(2+) is bound at residue glutamate 9. Position 15 (histidine 15) interacts with ATP. Glutamate 43 contacts K(+). Residues glutamate 56 and glutamine 99 each coordinate L-methionine. Residues 167-169, 235-238, aspartate 246, 252-253, alanine 269, lysine 273, and lysine 277 contribute to the ATP site; these read DGK, SGRF, and RK. Aspartate 246 provides a ligand contact to L-methionine. Residue lysine 277 participates in L-methionine binding.

Belongs to the AdoMet synthase family. In terms of assembly, homotetramer. Interacts with GRF3. Mn(2+) is required as a cofactor. Requires Mg(2+) as cofactor. The cofactor is Co(2+). K(+) serves as cofactor.

It is found in the cytoplasm. The catalysed reaction is L-methionine + ATP + H2O = S-adenosyl-L-methionine + phosphate + diphosphate. The protein operates within amino-acid biosynthesis; S-adenosyl-L-methionine biosynthesis; S-adenosyl-L-methionine from L-methionine: step 1/1. Its activity is regulated as follows. Inhibited by 5,5'-dithiobis-2-nitrobenzoic acid (DTNB) and N-ethylmaleimide (NEM) (in vitro). In terms of biological role, catalyzes the formation of S-adenosylmethionine from methionine and ATP. The reaction comprises two steps that are both catalyzed by the same enzyme: formation of S-adenosylmethionine (AdoMet) and triphosphate, and subsequent hydrolysis of the triphosphate. Involved in the biosynthesis of lignin. The polypeptide is S-adenosylmethionine synthase 3 (METK3) (Arabidopsis thaliana (Mouse-ear cress)).